A 382-amino-acid polypeptide reads, in one-letter code: Dual-specificity RNA methyltransferase RlmN (382 aa).

Catalysis depends on E96, which acts as the Proton acceptor. Residues Q102–D342 form the Radical SAM core domain. An intrachain disulfide couples C109 to C345. [4Fe-4S] cluster contacts are provided by C116, C120, and C123. S-adenosyl-L-methionine-binding positions include G170–E171, S202, S224–H226, and N302. The active-site S-methylcysteine intermediate is C345.

It belongs to the radical SAM superfamily. RlmN family. Requires [4Fe-4S] cluster as cofactor.

The protein localises to the cytoplasm. It catalyses the reaction adenosine(2503) in 23S rRNA + 2 reduced [2Fe-2S]-[ferredoxin] + 2 S-adenosyl-L-methionine = 2-methyladenosine(2503) in 23S rRNA + 5'-deoxyadenosine + L-methionine + 2 oxidized [2Fe-2S]-[ferredoxin] + S-adenosyl-L-homocysteine. The catalysed reaction is adenosine(37) in tRNA + 2 reduced [2Fe-2S]-[ferredoxin] + 2 S-adenosyl-L-methionine = 2-methyladenosine(37) in tRNA + 5'-deoxyadenosine + L-methionine + 2 oxidized [2Fe-2S]-[ferredoxin] + S-adenosyl-L-homocysteine. Its function is as follows. Specifically methylates position 2 of adenine 2503 in 23S rRNA and position 2 of adenine 37 in tRNAs. m2A2503 modification seems to play a crucial role in the proofreading step occurring at the peptidyl transferase center and thus would serve to optimize ribosomal fidelity. The sequence is that of Dual-specificity RNA methyltransferase RlmN from Pseudomonas fluorescens (strain ATCC BAA-477 / NRRL B-23932 / Pf-5).